The sequence spans 530 residues: UDP-glucuronosyltransferase 2A3 (530 aa).

An N-terminal signal peptide occupies residues 1-23 (MAPGKLASAVLLLLLCCAGSGFC). The Extracellular portion of the chain corresponds to 24-494 (GKVLVWPCEM…SWFQYHSLDV (471 aa)). N316 carries an N-linked (GlcNAc...) asparagine glycan. The chain crosses the membrane as a helical span at residues 495-515 (IGFLLACVASAILLVTKCCLF). Residues 516 to 530 (SFQNFIKIGKRIKKE) lie on the Cytoplasmic side of the membrane.

This sequence belongs to the UDP-glycosyltransferase family. In terms of tissue distribution, specifically expressed in liver and small intestine.

It is found in the membrane. It catalyses the reaction glucuronate acceptor + UDP-alpha-D-glucuronate = acceptor beta-D-glucuronoside + UDP + H(+). Functionally, UDP-glucuronosyltransferases catalyze phase II biotransformation reactions in which lipophilic substrates are conjugated with glucuronic acid to increase water solubility and enhance excretion. They are of major importance in the conjugation and subsequent elimination of potentially toxic xenobiotics and endogenous compounds. In Cavia porcellus (Guinea pig), this protein is UDP-glucuronosyltransferase 2A3 (UGT2A3).